The following is a 526-amino-acid chain: Acetyl-CoA hydrolase (526 aa).

Threonine 2 carries the N-acetylthreonine modification. A CoA-binding site is contributed by glycine 277–isoleucine 281. Residue glutamate 302 is the 5-glutamyl coenzyme A thioester intermediate of the active site. Position 350 is a phosphoserine (serine 350). Residues asparagine 392 and glycine 396 each coordinate CoA.

The protein belongs to the acetyl-CoA hydrolase/transferase family. In terms of assembly, monomer. Post-translationally, glycosylated; contains mannose.

The protein localises to the cytoplasm. The catalysed reaction is acetyl-CoA + H2O = acetate + CoA + H(+). Functionally, presumably involved in regulating the intracellular acetyl-CoA pool for fatty acid and cholesterol synthesis and fatty acid oxidation. It may be involved in overall regulation of acetylation during melatonin synthesis. In Saccharomyces cerevisiae (strain ATCC 204508 / S288c) (Baker's yeast), this protein is Acetyl-CoA hydrolase (ACH1).